The chain runs to 71 residues: U3-scytotoxin-Sth1h (71 aa).

The signal sequence occupies residues 1 to 33 (MSQNSITSYKMGFAKHFFLFAVLLCATAMYSVA). The propeptide occupies 34 to 39 (EPAQER). 3 disulfides stabilise this stretch: cysteine 46–cysteine 60, cysteine 53–cysteine 64, and cysteine 59–cysteine 69.

Expressed by the venom gland.

It is found in the secreted. In terms of biological role, probable insect neurotoxin with ion channel impairing activity. Does not show activity on 45 human receptors from 9 families (5-hydroxytryptamine, adrenergic, dopamine, muscarinic, histamine, neurotransmitter, opioid, sigma, and gaba(A) receptors). In vivo, when mixed with U3-SYTX-Sth1a does not cause paralytic or lethal activity when injected into crickets. It is noteworthy that crickets are evolutionarily distant from prey species. This is U3-scytotoxin-Sth1h from Scytodes thoracica (Spitting spider).